Here is a 442-residue protein sequence, read N- to C-terminus: Histidine--tRNA ligase (442 aa).

This sequence belongs to the class-II aminoacyl-tRNA synthetase family. Homodimer.

It is found in the cytoplasm. It catalyses the reaction tRNA(His) + L-histidine + ATP = L-histidyl-tRNA(His) + AMP + diphosphate + H(+). The polypeptide is Histidine--tRNA ligase (hisS) (Helicobacter pylori (strain J99 / ATCC 700824) (Campylobacter pylori J99)).